The sequence spans 456 residues: tRNA modification GTPase MnmE (456 aa).

The (6S)-5-formyl-5,6,7,8-tetrahydrofolate site is built by Arg-24, Glu-81, and Lys-120. In terms of domain architecture, TrmE-type G spans 216–379 (GMTVVIAGRP…LRDHLKACMG (164 aa)). Asn-226 lines the K(+) pocket. GTP is bound by residues 226 to 231 (NAGKSS), 245 to 251 (TAIAGTT), 270 to 273 (DTAG), and 335 to 338 (NKAD). Position 230 (Ser-230) interacts with Mg(2+). The K(+) site is built by Thr-245, Ile-247, and Thr-250. Thr-251 contributes to the Mg(2+) binding site. Lys-456 contacts (6S)-5-formyl-5,6,7,8-tetrahydrofolate.

This sequence belongs to the TRAFAC class TrmE-Era-EngA-EngB-Septin-like GTPase superfamily. TrmE GTPase family. Homodimer. Heterotetramer of two MnmE and two MnmG subunits. It depends on K(+) as a cofactor.

It is found in the cytoplasm. Its function is as follows. Exhibits a very high intrinsic GTPase hydrolysis rate. Involved in the addition of a carboxymethylaminomethyl (cmnm) group at the wobble position (U34) of certain tRNAs, forming tRNA-cmnm(5)s(2)U34. The chain is tRNA modification GTPase MnmE from Pseudomonas putida (strain W619).